The primary structure comprises 436 residues: UPF0597 protein YhaM (436 aa).

The protein belongs to the UPF0597 family.

This chain is UPF0597 protein YhaM, found in Salmonella heidelberg (strain SL476).